Reading from the N-terminus, the 139-residue chain is Thioredoxin H-type (139 aa).

The 113-residue stretch at Glu20–Asp132 folds into the Thioredoxin domain. Active-site nucleophile residues include Cys58 and Cys61. Cys58 and Cys61 form a disulfide bridge.

The protein localises to the cytoplasm. In terms of biological role, participates in various redox reactions through the reversible oxidation of the active center dithiol to a disulfide. The H form is known to activate a number of cytosolic enzymes. The chain is Thioredoxin H-type from Populus jackii (Balm of Gilead).